The sequence spans 707 residues: Polyribonucleotide nucleotidyltransferase (707 aa).

Residues D485 and D491 each contribute to the Mg(2+) site. In terms of domain architecture, KH spans 552–611; sequence PRIHTMKINSDKIKDVIGKGGAVIRALTEETGTTIEIEDDGTIKIAATEGAAAKEAIRRI. The region spanning 621–689 is the S1 motif domain; sequence GRIYTGKVMR…RQGRIRLSMK (69 aa).

The protein belongs to the polyribonucleotide nucleotidyltransferase family. Component of the RNA degradosome, which is a multiprotein complex involved in RNA processing and mRNA degradation. Mg(2+) serves as cofactor.

Its subcellular location is the cytoplasm. The enzyme catalyses RNA(n+1) + phosphate = RNA(n) + a ribonucleoside 5'-diphosphate. Functionally, involved in mRNA degradation. Catalyzes the phosphorolysis of single-stranded polyribonucleotides processively in the 3'- to 5'-direction. This is Polyribonucleotide nucleotidyltransferase from Photobacterium profundum (strain SS9).